A 586-amino-acid polypeptide reads, in one-letter code: Clathrin heavy chain linker domain-containing protein 1 (586 aa).

Residues 174 to 232 are a coiled coil; it reads MNLDALTKYMKHLEDKYAEIKQAMLIKYVPAQRKSDLDEEMIVLLKRRDVAENLNRKLQ.

The protein is Clathrin heavy chain linker domain-containing protein 1 (CLHC1) of Macaca fascicularis (Crab-eating macaque).